A 146-amino-acid chain; its full sequence is 3-dehydroquinate dehydratase (146 aa).

Catalysis depends on Tyr-24, which acts as the Proton acceptor. The substrate site is built by Asn-73, His-79, and Asp-86. His-99 functions as the Proton donor in the catalytic mechanism. Residues 100-101 and Arg-110 each bind substrate; that span reads LS.

Belongs to the type-II 3-dehydroquinase family. As to quaternary structure, homododecamer.

The enzyme catalyses 3-dehydroquinate = 3-dehydroshikimate + H2O. Its pathway is metabolic intermediate biosynthesis; chorismate biosynthesis; chorismate from D-erythrose 4-phosphate and phosphoenolpyruvate: step 3/7. Catalyzes a trans-dehydration via an enolate intermediate. This chain is 3-dehydroquinate dehydratase, found in Shewanella baltica (strain OS185).